A 509-amino-acid chain; its full sequence is Citrinin biosynthesis transcriptional activator mrl3 (509 aa).

The tract at residues 1–22 (MASTAHRQPSRPTTRQRQRTGR) is disordered. The segment at residues 24–51 (CEECRRRKLRCDGQQPRCGVCVDSGVTC) is a DNA-binding region (zn(2)-C6 fungal-type). Positions 97 to 143 (STPLTNDHHDGCSVSSASSRSDSNPPPTVSEPDMSLPNTTTSVSSAP) are disordered. Low complexity predominate over residues 109-119 (SVSSASSRSDS). Residues 132–143 (LPNTTTSVSSAP) are compositionally biased toward polar residues.

The protein resides in the nucleus. Transcription factor that regulates the expression of the gene cluster that mediates the biosynthesis of the mycotoxin citrinin, a hepato-nephrotoxic compound to humans due to inhibition of respiration complex III. The chain is Citrinin biosynthesis transcriptional activator mrl3 from Monascus ruber (Mold).